Consider the following 409-residue polypeptide: Elongation factor Tu, chloroplastic (409 aa).

In terms of domain architecture, tr-type G spans lysine 10–valine 214. The interval glycine 19 to threonine 26 is G1. Glycine 19–threonine 26 is a binding site for GTP. Residue threonine 26 participates in Mg(2+) binding. The interval glycine 60–asparagine 64 is G2. The interval aspartate 81 to glycine 84 is G3. Residues aspartate 81–histidine 85 and asparagine 136–aspartate 139 contribute to the GTP site. The tract at residues asparagine 136 to aspartate 139 is G4. Residues serine 174–leucine 176 form a G5 region.

This sequence belongs to the TRAFAC class translation factor GTPase superfamily. Classic translation factor GTPase family. EF-Tu/EF-1A subfamily.

The protein localises to the plastid. Its subcellular location is the chloroplast. It catalyses the reaction GTP + H2O = GDP + phosphate + H(+). GTP hydrolase that promotes the GTP-dependent binding of aminoacyl-tRNA to the A-site of ribosomes during protein biosynthesis. The protein is Elongation factor Tu, chloroplastic (tufA) of Tupiella akineta (Green alga).